A 396-amino-acid polypeptide reads, in one-letter code: Acetate kinase (396 aa).

A Mg(2+)-binding site is contributed by Asn-8. Lys-15 lines the ATP pocket. Residue Arg-90 coordinates substrate. Asp-147 (proton donor/acceptor) is an active-site residue. ATP-binding positions include 207–211, 283–285, and 330–334; these read HLGSG, DMR, and GIGEN. Position 384 (Glu-384) interacts with Mg(2+).

It belongs to the acetokinase family. Homodimer. Requires Mg(2+) as cofactor. The cofactor is Mn(2+).

The protein resides in the cytoplasm. It catalyses the reaction acetate + ATP = acetyl phosphate + ADP. It functions in the pathway metabolic intermediate biosynthesis; acetyl-CoA biosynthesis; acetyl-CoA from acetate: step 1/2. Catalyzes the formation of acetyl phosphate from acetate and ATP. Can also catalyze the reverse reaction. This is Acetate kinase from Lacticaseibacillus paracasei (strain ATCC 334 / BCRC 17002 / CCUG 31169 / CIP 107868 / KCTC 3260 / NRRL B-441) (Lactobacillus paracasei).